The chain runs to 379 residues: Cobalt-precorrin-5B C(1)-methyltransferase (379 aa).

This sequence belongs to the CbiD family.

The enzyme catalyses Co-precorrin-5B + S-adenosyl-L-methionine = Co-precorrin-6A + S-adenosyl-L-homocysteine. It functions in the pathway cofactor biosynthesis; adenosylcobalamin biosynthesis; cob(II)yrinate a,c-diamide from sirohydrochlorin (anaerobic route): step 6/10. Its function is as follows. Catalyzes the methylation of C-1 in cobalt-precorrin-5B to form cobalt-precorrin-6A. The sequence is that of Cobalt-precorrin-5B C(1)-methyltransferase from Salmonella arizonae (strain ATCC BAA-731 / CDC346-86 / RSK2980).